The primary structure comprises 95 residues: MARSIKKGPFVDDFLVKKIEDMIKTNKKAVVKTWSRRSTILPEFVGHTFAVHNGKKFIPVFVTENMVGHKLGEFAPTRTFGGHSAEKKVAKAPGK.

This sequence belongs to the universal ribosomal protein uS19 family.

Protein S19 forms a complex with S13 that binds strongly to the 16S ribosomal RNA. In Myxococcus xanthus (strain DK1622), this protein is Small ribosomal subunit protein uS19.